The primary structure comprises 511 residues: Ribose import ATP-binding protein RbsA (511 aa).

2 ABC transporter domains span residues 7-242 (LQIS…VGRE) and 256-500 (CSTT…SGTQ). 39-46 (GENGAGKS) contacts ATP.

It belongs to the ABC transporter superfamily. Ribose importer (TC 3.A.1.2.1) family. In terms of assembly, the complex is composed of an ATP-binding protein (RbsA), two transmembrane proteins (RbsC) and a solute-binding protein (RbsB).

It localises to the cell inner membrane. It carries out the reaction D-ribose(out) + ATP + H2O = D-ribose(in) + ADP + phosphate + H(+). Part of the ABC transporter complex RbsABC involved in ribose import. Responsible for energy coupling to the transport system. The protein is Ribose import ATP-binding protein RbsA of Ruegeria sp. (strain TM1040) (Silicibacter sp.).